The following is a 319-amino-acid chain: tRNA N6-adenosine threonylcarbamoyltransferase (319 aa).

Fe cation is bound by residues His-110 and His-114. Substrate is bound by residues 135–139, Asp-168, Gly-181, Asp-185, and Asn-277; that span reads VVSGG. Asp-301 lines the Fe cation pocket.

This sequence belongs to the KAE1 / TsaD family. Fe(2+) is required as a cofactor.

It is found in the cytoplasm. The enzyme catalyses L-threonylcarbamoyladenylate + adenosine(37) in tRNA = N(6)-L-threonylcarbamoyladenosine(37) in tRNA + AMP + H(+). Its function is as follows. Required for the formation of a threonylcarbamoyl group on adenosine at position 37 (t(6)A37) in tRNAs that read codons beginning with adenine. Is involved in the transfer of the threonylcarbamoyl moiety of threonylcarbamoyl-AMP (TC-AMP) to the N6 group of A37, together with TsaE and TsaB. TsaD likely plays a direct catalytic role in this reaction. This Mycoplasma pneumoniae (strain ATCC 29342 / M129 / Subtype 1) (Mycoplasmoides pneumoniae) protein is tRNA N6-adenosine threonylcarbamoyltransferase.